Reading from the N-terminus, the 229-residue chain is MVKNNKIQKNKISNSCRMIMSTDPNNILMRHLKNLTDDEFKCIIHRSSDFLYLSDSDYTSITKETLVSEIVEEYPDDCNKILAIIFLVLDKDIDVDIKTKLKPKPAVRFAILDKMTEDIKLTDLVRHYFRYIEQDIPLGPLFKKIDSYRTRAINKYSKELGLATEYFNKYGHLMFYTLPIPYNRFFCRNSIGFLAVLSPTIGHVKAFYKFIEYVSIDDRRKFKKELMSK.

This sequence belongs to the orthopoxvirus OPG034 family.

The sequence is that of Protein OPG034 (OPG034) from Vaccinia virus (strain Western Reserve) (VACV).